The sequence spans 321 residues: NADPH-dependent codeinone reductase 1-1 (321 aa).

Residues threonine 27 and aspartate 51 each coordinate NADPH. Residues tyrosine 56 and histidine 119 each act as proton donor in the active site. Histidine 119 contacts substrate. NADPH is bound by residues glutamine 187, serine 214, leucine 216, serine 264, and arginine 269.

Belongs to the aldo/keto reductase family. In terms of tissue distribution, latex secreting cells (laticifer cells). Expressed constitutively and ubiquitously with highest levels in capsules. Restricted to the parietal region of sieve elements adjacent or proximal to laticifers in roots, stems, leaves and carpels.

The protein localises to the cytoplasm. The protein resides in the cytosol. It carries out the reaction codeine + NADP(+) = codeinone + NADPH + H(+). It catalyses the reaction neopine + NADP(+) = neopinone + NADPH + H(+). The catalysed reaction is morphine + NADP(+) = morphinone + NADPH + H(+). The enzyme catalyses neomorphine + NADP(+) = neomorphinone + NADPH + H(+). Its pathway is alkaloid biosynthesis; morphine biosynthesis. Its function is as follows. NADPH-dependent reductase involved in biosynthesis of morphinan-type benzylisoquinoline and opiate alkaloids natural products. Reduces codeinone to codeine in the penultimate step in morphine biosynthesis. Can use morphinone, hydrocodone and hydromorphone as substrate during reductive reaction with NADPH as cofactor, and morphine and dihydrocodeine as substrate during oxidative reaction with NADP as cofactor. Converts morphinone to morphine, and neomorphinone to neomorphine. Reduces irreversibly neopinone, a spontaneous isomer of codeinone, to neopine; in planta, neopine levels are limited to low levels. The protein is NADPH-dependent codeinone reductase 1-1 of Papaver somniferum (Opium poppy).